A 390-amino-acid chain; its full sequence is Lissencephaly-1 homolog (390 aa).

The 33-residue stretch at 7–39 (QREEINRAVAEYLQNNGYSEAFNMLLKEASLSE) folds into the LisH domain. A coiled-coil region spans residues 54 to 80 (TTVLRLQRKVNDLEAKLLESQQEINHG). 7 WD repeats span residues 104-145 (GHRL…KTLK), 146-185 (GHTD…DCLK), 189-228 (GHEH…CVFT), 231-270 (GHND…RNWY), 272-313 (EIMS…VIFT), 316-355 (AHEN…CMKA), and 358-390 (AHEH…WECR).

This sequence belongs to the WD repeat LIS1/nudF family.

The protein resides in the cytoplasm. Its subcellular location is the cytoskeleton. The protein localises to the microtubule organizing center. It is found in the centrosome. Positively regulates the activity of the minus-end directed microtubule motor protein dynein. May enhance dynein-mediated microtubule sliding by targeting dynein to the microtubule plus end. Required for several dynein- and microtubule-dependent processes. The chain is Lissencephaly-1 homolog from Caenorhabditis briggsae.